The following is a 225-amino-acid chain: MAPVKGPLTPIQVENLQFPASITSPATAKSYFLGGAGERGLTIEGKFIKFTGLGVYLEDKTVDSLATKWKGKSSQELLDSLDFYRDIISSPSEKLIRGSKLRPLSGVEYSRKVMENCVAHMKSTGTYGEAEAAAIGKFAEAFRNLDFPPGSSVFYRQSPDGELGLSFSPDDTLPEKEAVVIENKALSEAVLETMIGEHAVSPDLKRCLAERLPAVLNQGLLLSGN.

Positions 51, 116, and 193 each coordinate substrate.

It belongs to the chalcone isomerase family.

It catalyses the reaction a chalcone = a flavanone.. It participates in secondary metabolite biosynthesis; flavonoid biosynthesis. Catalyzes the intramolecular cyclization of bicyclic chalcones into tricyclic (S)-flavanones. Responsible for the isomerization of 4,2',4',6'-tetrahydroxychalcone (also termed chalcone) into naringenin. The polypeptide is Chalcone--flavanone isomerase 3 (CHI3) (Lotus japonicus (Lotus corniculatus var. japonicus)).